A 181-amino-acid polypeptide reads, in one-letter code: Ribulose bisphosphate carboxylase small subunit, chloroplastic 1 (181 aa).

The N-terminal 57 residues, 1-57 (MASSIVSSAAAATRSNVAQASMVAPFTGLKSAASFPVTKKNNNVDITSLASNGGRVR), are a transit peptide targeting the chloroplast.

This sequence belongs to the RuBisCO small chain family. In terms of assembly, (Microbial infection) Binds to tobamovirus movement protein; this interaction seems required for viral systemic movement. As to quaternary structure, heterohexadecamer of 8 large and 8 small subunits.

The protein localises to the plastid. The protein resides in the chloroplast. Its subcellular location is the cell junction. It localises to the plasmodesma. Its function is as follows. RuBisCO catalyzes two reactions: the carboxylation of D-ribulose 1,5-bisphosphate, the primary event in carbon dioxide fixation, as well as the oxidative fragmentation of the pentose substrate. Both reactions occur simultaneously and in competition at the same active site. Although the small subunit is not catalytic it is essential for maximal activity. Involved in antiviral defenses. This is Ribulose bisphosphate carboxylase small subunit, chloroplastic 1 from Solanum lycopersicum (Tomato).